A 91-amino-acid polypeptide reads, in one-letter code: Large ribosomal subunit protein eL31 (91 aa).

The protein belongs to the eukaryotic ribosomal protein eL31 family.

In Pyrobaculum neutrophilum (strain DSM 2338 / JCM 9278 / NBRC 100436 / V24Sta) (Thermoproteus neutrophilus), this protein is Large ribosomal subunit protein eL31.